A 94-amino-acid chain; its full sequence is Non-specific lipid-transfer protein 1 (94 aa).

Cystine bridges form between C4-C53, C14-C30, C31-C76, and C51-C90.

Its function is as follows. Plant non-specific lipid-transfer proteins transfer phospholipids as well as galactolipids across membranes. May play a role in wax or cutin deposition in the cell walls of expanding epidermal cells and certain secretory tissues. The protein is Non-specific lipid-transfer protein 1 of Amaranthus hypochondriacus (Prince-of-Wales feather).